Here is a 198-residue protein sequence, read N- to C-terminus: 8-oxoguanine DNA glycosylase/AP lyase (198 aa).

Active-site residues include Lys-122 and Asp-140.

Belongs to the type-2 OGG1 family. In terms of assembly, monomer.

It catalyses the reaction 2'-deoxyribonucleotide-(2'-deoxyribose 5'-phosphate)-2'-deoxyribonucleotide-DNA = a 3'-end 2'-deoxyribonucleotide-(2,3-dehydro-2,3-deoxyribose 5'-phosphate)-DNA + a 5'-end 5'-phospho-2'-deoxyribonucleoside-DNA + H(+). In terms of biological role, catalyzes the excision of an oxidatively damaged form of guanine (7,8-dihydro-8-oxoguanine = 8-oxoG) from DNA. Also cleaves the DNA backbone at apurinic/apyrimidinic sites (AP sites). Efficiently cleaves oligomers containing 8-oxoG:C and 8-oxoG:G base pairs, and is less effective on oligomers containing 8-oxoG:T and 8-oxoG:A mispairs. This Archaeoglobus fulgidus (strain ATCC 49558 / DSM 4304 / JCM 9628 / NBRC 100126 / VC-16) protein is 8-oxoguanine DNA glycosylase/AP lyase.